The sequence spans 425 residues: Tol-Pal system protein TolB (425 aa).

The first 22 residues, 1–22 (MRNFLYCTGVLLLLWMSTSSQA), serve as a signal peptide directing secretion.

Belongs to the TolB family. In terms of assembly, the Tol-Pal system is composed of five core proteins: the inner membrane proteins TolA, TolQ and TolR, the periplasmic protein TolB and the outer membrane protein Pal. They form a network linking the inner and outer membranes and the peptidoglycan layer.

It localises to the periplasm. Part of the Tol-Pal system, which plays a role in outer membrane invagination during cell division and is important for maintaining outer membrane integrity. The sequence is that of Tol-Pal system protein TolB from Nitrosomonas europaea (strain ATCC 19718 / CIP 103999 / KCTC 2705 / NBRC 14298).